The primary structure comprises 154 residues: Ferredoxin C 1, chloroplastic (154 aa).

The transit peptide at 1 to 56 (MATLPLPTQTSTISLPKPYLSNSFSFPLRNATLSTTTNRRNFLTTGRIIARAYKVV) directs the protein to the chloroplast. A 2Fe-2S ferredoxin-type domain is found at 57–142 (VEHDGKTTEL…DCHIKMIPEE (86 aa)). [2Fe-2S] cluster-binding residues include cysteine 89, cysteine 94, cysteine 97, and cysteine 126.

The protein belongs to the 2Fe2S plant-type ferredoxin family. [2Fe-2S] cluster serves as cofactor.

It localises to the plastid. Its subcellular location is the chloroplast. Its function is as follows. Ferredoxins are iron-sulfur proteins that transfer electrons in a wide variety of metabolic reactions. Mediates alternative electron partitioning in conditions of acceptor limitation at photosystem I. Accepts electrons from photosystem I (PSI) and is capable of electron transfer with FNR, but cannot support photoreduction of NADP(+). This Arabidopsis thaliana (Mouse-ear cress) protein is Ferredoxin C 1, chloroplastic.